A 920-amino-acid chain; its full sequence is Probable helicase HelY (920 aa).

In terms of domain architecture, Helicase ATP-binding spans 26–184; the sequence is CAALERGHGV…WVQTVRGDTT (159 aa). 39-46 is an ATP binding site; it reads APTGAGKT. The short motif at 132-135 is the DEVH box element; sequence DEVH. In terms of domain architecture, Helicase C-terminal spans 265–469; that stretch reads EVIAILDAEG…SYNMTINLVH (205 aa).

Belongs to the helicase family. SKI2 subfamily.

In Mycobacterium leprae (strain TN), this protein is Probable helicase HelY (helY).